The primary structure comprises 580 residues: 9,13-epoxylabda-14-ene synthase, chloroplastic (580 aa).

A chloroplast-targeting transit peptide spans 1-32 (MSITFNLKIAPFSGPGIQRSKETFPATEIQIT). Residues Asp322, Asp326, Asn466, Thr470, and Glu474 each contribute to the Mg(2+) site. The DDXXD motif motif lies at 322 to 326 (DDFFD).

It belongs to the terpene synthase family. The cofactor is Mg(2+). As to expression, present in both leaves and flowers, with higher levels in leaves.

Its subcellular location is the plastid. The protein localises to the chloroplast. The catalysed reaction is peregrinol diphosphate = (13R)-9,13-epoxylabd-14-ene + diphosphate. It carries out the reaction (+)-copalyl diphosphate = miltiradiene + diphosphate. It catalyses the reaction 8-hydroxycopalyl diphosphate = (13R)-manoyl oxide + diphosphate. Its pathway is secondary metabolite biosynthesis; terpenoid biosynthesis. In terms of biological role, involved in the biosynthesis of labdane-type diterpenoid including marrubiin and other labdane-related furanoid diterpenoids with potential applications as anti-diabetics, analgesics or vasorelaxants. Terpene synthase the catalyzes the conversion of peregrinol diphosphate to 9,13(R)-epoxy-labd-14-ene, from (+)-copalyl diphosphate ((+)-CPP) to miltiradiene and from 8-hydroxycopalyl diphosphate (LPP, labda-13-en-8-ol diphosphate) to manoyl oxide. This Marrubium vulgare (White horehound) protein is 9,13-epoxylabda-14-ene synthase, chloroplastic.